We begin with the raw amino-acid sequence, 136 residues long: Calcitonin (136 aa).

A signal peptide spans 1–25 (MGFLKFSPFLVVSILLLYQACGLQA). Residues 26–82 (VPLRSTLESSPGMATLSEEEARLLAALVQNYMQMKVRELEQEEEQEAEGSSLDSPRS) constitute a propeptide that is removed on maturation. Serine 42 is subject to Phosphoserine. The tract at residues 64 to 84 (LEQEEEQEAEGSSLDSPRSKR) is disordered. Cysteines 85 and 91 form a disulfide. The N-linked (GlcNAc...) asparagine glycan is linked to asparagine 87. A disordered region spans residues 114-136 (GAPGKKRDMAKDLETNHHPYFGN). Proline amide is present on proline 116. Over residues 118-130 (KKRDMAKDLETNH) the composition is skewed to basic and acidic residues. A propeptide spanning residues 121–136 (DMAKDLETNHHPYFGN) is cleaved from the precursor.

The protein belongs to the calcitonin family.

Its subcellular location is the secreted. Functionally, calcitonin is a peptide hormone that causes a rapid but short-lived drop in the level of calcium and phosphate in blood by promoting the incorporation of those ions in the bones. Calcitonin function is mediated by the calcitonin receptor/CALCR and the CALCR-RAMP2 (AMYR2) receptor complex. The sequence is that of Calcitonin from Rattus norvegicus (Rat).